An 89-amino-acid polypeptide reads, in one-letter code: DNA-directed RNA polymerase subunit Rpo6 (89 aa).

Belongs to the archaeal Rpo6/eukaryotic RPB6 RNA polymerase subunit family. In terms of assembly, part of the 13-subunit RNA polymerase complex.

Its subcellular location is the cytoplasm. It catalyses the reaction RNA(n) + a ribonucleoside 5'-triphosphate = RNA(n+1) + diphosphate. In terms of biological role, DNA-dependent RNA polymerase (RNAP) catalyzes the transcription of DNA into RNA using the four ribonucleoside triphosphates as substrates. Reconstitution experiments show this subunit is required for basic activity. The chain is DNA-directed RNA polymerase subunit Rpo6 from Sulfolobus acidocaldarius (strain ATCC 33909 / DSM 639 / JCM 8929 / NBRC 15157 / NCIMB 11770).